The sequence spans 440 residues: Protein scalloped (440 aa).

A disordered region spans residues 32-65; sequence TEQQAVGPGTIPSPWTPVNAGPPGALGSADTNGS. Positions 86–162 form a DNA-binding region, TEA; sequence SADAEGVWSP…QVLARRKLRE (77 aa).

In terms of assembly, the C-terminus of sd interacts with the C-terminal serine-rich protein domain of vg, to form a complex which acts as a selector for wing development. Interacts (via C-terminus) with yki (via N-terminus) and this interaction enhances its transcriptional activity. Subset of neuroblasts in the central nervous system and in the peripheral sense organs of the embryo. Expressed in the developing wing primordia initially along the D/V wing boundary, and by the late third larval instar, maximal expression is seen in cells at the D/V wing disk boundary. Less expression in cells located farther from this boundary. Also expressed in wing progenitor cells.

Its subcellular location is the nucleus. Transcription factor which plays a key role in the Hippo/SWH (Sav/Wts/Hpo) signaling pathway, a signaling pathway that plays a pivotal role in organ size control and tumor suppression by restricting proliferation and promoting apoptosis. The core of this pathway is composed of a kinase cascade wherein Hippo (Hpo), in complex with its regulatory protein Salvador (Sav), phosphorylates and activates Warts (Wts) in complex with its regulatory protein Mats, which in turn phosphorylates and inactivates the Yorkie (Yki) oncoprotein. The Hippo/SWH signaling pathway inhibits the activity of the transcriptional complex formed by Scalloped (sd) and Yki and the target genes of this pathway include cyclin-E (cycE), diap1 and bantam. Sd promotes nuclear localization of Yki. Involved in the regulation of cell-specific gene expression during development, particularly in the differentiation of the nervous system. When in combination with vestigial (vg) it acts as a transcriptional activation complex that regulates gene expression in the wing. Binding to vg switches the DNA target selectivity of sd. Required autonomously for cell proliferation and viability within the wing blade. Required for proper sensory organ precursor (SOP) differentiation at the wing margin; required for correct expression of sens. This Drosophila melanogaster (Fruit fly) protein is Protein scalloped (sd).